We begin with the raw amino-acid sequence, 250 residues long: Triosephosphate isomerase (250 aa).

9-11 (NWK) contacts substrate. The active-site Electrophile is H94. Catalysis depends on E166, which acts as the Proton acceptor. Substrate contacts are provided by residues G172, S212, and 233–234 (GG).

The protein belongs to the triosephosphate isomerase family. Homodimer.

The protein resides in the cytoplasm. The catalysed reaction is D-glyceraldehyde 3-phosphate = dihydroxyacetone phosphate. The protein operates within carbohydrate biosynthesis; gluconeogenesis. It functions in the pathway carbohydrate degradation; glycolysis; D-glyceraldehyde 3-phosphate from glycerone phosphate: step 1/1. Functionally, involved in the gluconeogenesis. Catalyzes stereospecifically the conversion of dihydroxyacetone phosphate (DHAP) to D-glyceraldehyde-3-phosphate (G3P). The sequence is that of Triosephosphate isomerase from Treponema denticola (strain ATCC 35405 / DSM 14222 / CIP 103919 / JCM 8153 / KCTC 15104).